Reading from the N-terminus, the 743-residue chain is Type VI secretion system spike protein VgrG1 (743 aa).

This sequence belongs to the VgrG protein family.

Its subcellular location is the secreted. The catalysed reaction is L-arginyl-[protein] + NAD(+) = N(omega)-(ADP-D-ribosyl)-L-arginyl-[protein] + nicotinamide + H(+). Functionally, part of the type VI secretion system specialized secretion system, which delivers several virulence factors in both prokaryotic and eukaryotic cells during infection. Acts directly as an secreted effector with an actin ADP-ribosyltransferase activity that disrupts the host actin cytoskeleton, leading to a decrease in host cell viability and an increase in apoptosis. The chain is Type VI secretion system spike protein VgrG1 (vgrG1) from Aeromonas hydrophila subsp. hydrophila (strain ATCC 7966 / DSM 30187 / BCRC 13018 / CCUG 14551 / JCM 1027 / KCTC 2358 / NCIMB 9240 / NCTC 8049).